Consider the following 242-residue polypeptide: Large ribosomal subunit protein uL1 (242 aa).

Belongs to the universal ribosomal protein uL1 family. Part of the 50S ribosomal subunit.

In terms of biological role, binds directly to 23S rRNA. The L1 stalk is quite mobile in the ribosome, and is involved in E site tRNA release. Functionally, protein L1 is also a translational repressor protein, it controls the translation of the L11 operon by binding to its mRNA. The chain is Large ribosomal subunit protein uL1 from Wigglesworthia glossinidia brevipalpis.